The primary structure comprises 344 residues: Ferrochelatase (344 aa).

Residues histidine 196 and glutamate 277 each coordinate Fe cation.

This sequence belongs to the ferrochelatase family.

Its subcellular location is the cytoplasm. It catalyses the reaction heme b + 2 H(+) = protoporphyrin IX + Fe(2+). It functions in the pathway porphyrin-containing compound metabolism; protoheme biosynthesis; protoheme from protoporphyrin-IX: step 1/1. Functionally, catalyzes the ferrous insertion into protoporphyrin IX. This is Ferrochelatase from Synechococcus sp. (strain JA-2-3B'a(2-13)) (Cyanobacteria bacterium Yellowstone B-Prime).